The sequence spans 344 residues: GTPase Obg (344 aa).

The Obg domain occupies 1-159 (MKFLDEAKVY…MWLILRLKLI (159 aa)). One can recognise an OBG-type G domain in the interval 160 to 327 (ADAGLVGLPN…ALRAIQAQLD (168 aa)). GTP-binding positions include 166–173 (GLPNAGKS), 191–195 (FTTLH), 212–215 (DIPG), 279–282 (SKAD), and 308–310 (SAA). Mg(2+) contacts are provided by Ser173 and Thr193.

The protein belongs to the TRAFAC class OBG-HflX-like GTPase superfamily. OBG GTPase family. Monomer. Mg(2+) is required as a cofactor.

It is found in the cytoplasm. Its function is as follows. An essential GTPase which binds GTP, GDP and possibly (p)ppGpp with moderate affinity, with high nucleotide exchange rates and a fairly low GTP hydrolysis rate. Plays a role in control of the cell cycle, stress response, ribosome biogenesis and in those bacteria that undergo differentiation, in morphogenesis control. In Methylorubrum populi (strain ATCC BAA-705 / NCIMB 13946 / BJ001) (Methylobacterium populi), this protein is GTPase Obg.